Here is a 202-residue protein sequence, read N- to C-terminus: Glycerol-3-phosphate acyltransferase (202 aa).

5 helical membrane passes run 3–23 (NLIIYAFIYLLGSIPFGLILA), 87–107 (LLWSVAVLAILGHCFSIYLLF), 118–138 (GAMIVLLPLEVLTAFIVWVVI), 144–164 (ISSLASLAALLAFVVSSFIFN), and 167–187 (LEIHTHAPVFIIAFIIVYKHL).

The protein belongs to the PlsY family. In terms of assembly, probably interacts with PlsX.

It localises to the cell inner membrane. It carries out the reaction an acyl phosphate + sn-glycerol 3-phosphate = a 1-acyl-sn-glycero-3-phosphate + phosphate. Its pathway is lipid metabolism; phospholipid metabolism. Its function is as follows. Catalyzes the transfer of an acyl group from acyl-phosphate (acyl-PO(4)) to glycerol-3-phosphate (G3P) to form lysophosphatidic acid (LPA). This enzyme utilizes acyl-phosphate as fatty acyl donor, but not acyl-CoA or acyl-ACP. The sequence is that of Glycerol-3-phosphate acyltransferase from Campylobacter jejuni subsp. jejuni serotype O:2 (strain ATCC 700819 / NCTC 11168).